The following is a 147-amino-acid chain: Hemoglobin subunit epsilon-1 (147 aa).

The region spanning 3–147 (HFTAEEKAAI…VATALAHKYH (145 aa)) is the Globin domain. Histidine 64 and histidine 93 together coordinate heme b.

The protein belongs to the globin family. Heterotetramer of two epsilon chains and two alpha chains. In terms of tissue distribution, red blood cells.

Beta-type chain found in early embryos. The sequence is that of Hemoglobin subunit epsilon-1 (HBE1) from Capra hircus (Goat).